We begin with the raw amino-acid sequence, 37 residues long: Fructose-bisphosphate aldolase A (37 aa).

Belongs to the class I fructose-bisphosphate aldolase family. As to quaternary structure, tetramer.

The enzyme catalyses beta-D-fructose 1,6-bisphosphate = D-glyceraldehyde 3-phosphate + dihydroxyacetone phosphate. It functions in the pathway carbohydrate degradation; glycolysis; D-glyceraldehyde 3-phosphate and glycerone phosphate from D-glucose: step 4/4. Plays a key role in glycolysis and gluconeogenesis. This is Fructose-bisphosphate aldolase A from Thunnus albacares (Yellowfin tuna).